Consider the following 225-residue polypeptide: UPF0758 protein Bpet3149 (225 aa).

The MPN domain maps to 103–225; it reads AMSEPGSVKR…VVSMAELGLL (123 aa). Zn(2+) contacts are provided by His-174, His-176, and Asp-187. Residues 174-187 carry the JAMM motif motif; that stretch reads HNHPSGSAQPSQAD.

The protein belongs to the UPF0758 family.

This chain is UPF0758 protein Bpet3149, found in Bordetella petrii (strain ATCC BAA-461 / DSM 12804 / CCUG 43448).